Reading from the N-terminus, the 76-residue chain is KANTR integral membrane protein (76 aa).

A signal peptide spans 1–25 (MSPFSLLILVICAFSLFFLINLSRG). At 26 to 34 (LSILLVFTK) the chain is on the extracellular side. A helical transmembrane segment spans residues 35 to 55 (NQLLALLLLSIVSLFSISLIS). Residues 56–76 (ALIFFDLLPSTFFGFILLLFF) lie on the Cytoplasmic side of the membrane.

The protein resides in the membrane. The chain is KANTR integral membrane protein from Mus musculus (Mouse).